The following is a 434-amino-acid chain: Nicotinate phosphoribosyltransferase (434 aa).

The residue at position 242 (His-242) is a Phosphohistidine; by autocatalysis.

The protein belongs to the NAPRTase family. In terms of processing, transiently phosphorylated on a His residue during the reaction cycle. Phosphorylation strongly increases the affinity for substrates and increases the rate of nicotinate D-ribonucleotide production. Dephosphorylation regenerates the low-affinity form of the enzyme, leading to product release.

The enzyme catalyses nicotinate + 5-phospho-alpha-D-ribose 1-diphosphate + ATP + H2O = nicotinate beta-D-ribonucleotide + ADP + phosphate + diphosphate. Its pathway is cofactor biosynthesis; NAD(+) biosynthesis; nicotinate D-ribonucleotide from nicotinate: step 1/1. Functionally, catalyzes the synthesis of beta-nicotinate D-ribonucleotide from nicotinate and 5-phospho-D-ribose 1-phosphate at the expense of ATP. The sequence is that of Nicotinate phosphoribosyltransferase from Brucella melitensis biotype 1 (strain ATCC 23456 / CCUG 17765 / NCTC 10094 / 16M).